The chain runs to 331 residues: Induced myeloid leukemia cell differentiation protein Mcl-1 homolog (331 aa).

The segment at 85-156 (LAVPPEEMAA…PPEEEEDDLY (72 aa)) is PEST-like. A Phosphoserine modification is found at S102. A Glycyl lysine isopeptide (Lys-Gly) (interchain with G-Cter in ubiquitin) cross-link involves residue K117. The segment at 130-154 (EAAKSSGADGSLPSTPPPPEEEEDD) is disordered. S140 carries the phosphoserine; by GSK3-alpha and GSK3-beta modification. S143 is subject to Phosphoserine. T144 carries the post-translational modification Phosphothreonine; by MAPK. Residues K175 and K178 each participate in a glycyl lysine isopeptide (Lys-Gly) (interchain with G-Cter in ubiquitin) cross-link. The short motif at 190-204 (ALETLRRVGDGVQRN) is the BH3 element. The BH1 signature appears at 234 to 253 (VFKDGVTNWGRIVTLISFGA). The BH2 motif lies at 285 to 300 (DWLVKQRGWDGFVEFF). A helical transmembrane segment spans residues 308-330 (GIRNVLLAFAGVAGVGAGLAYLI).

This sequence belongs to the Bcl-2 family. As to quaternary structure, interacts with HIF3A isoform 2 (via C-terminus domain). Interacts with BAD, BOK, BIK, BAX, BAK1, and TPT1. Interacts with BBC3, BMF and PMAIP1. Interacts with BOP. Interacts with BCL2L11; this interaction may sequester BCL2L11 and prevent its pro-apoptotic activity. Interacts with GIMAP5 and HSPA8/HSC70; the interaction between HSPA8 and MCL1 is impaired in the absence of GIMAP5. Cleaved by CASP3 during apoptosis, yielding a pro-apoptotic C-terminal fragment. Post-translationally, rapidly degraded in the absence of phosphorylation in the PEST region. In terms of processing, phosphorylated on Ser-140, by GSK3, in response to IL3/interleukin-3 withdrawal. Phosphorylation at Ser-140 induces ubiquitination and proteasomal degradation, abrogating the anti-apoptotic activity. Treatment with taxol or okadaic acid induces phosphorylation on additional sites. Ubiquitinated. Ubiquitination is induced by phosphorylation at Ser-140. Deubiquitinated by USP20; leading to increased stability.

The protein resides in the membrane. Its subcellular location is the cytoplasm. It is found in the mitochondrion. It localises to the nucleus. The protein localises to the nucleoplasm. Its function is as follows. Involved in the regulation of apoptosis versus cell survival, and in the maintenance of viability but not of proliferation. Mediates its effects by interactions with a number of other regulators of apoptosis. Isoform 2 has antiapoptotic activity. The polypeptide is Induced myeloid leukemia cell differentiation protein Mcl-1 homolog (Mcl1) (Mus musculus (Mouse)).